Reading from the N-terminus, the 279-residue chain is Urease accessory protein UreD (279 aa).

This sequence belongs to the UreD family. In terms of assembly, ureD, UreF and UreG form a complex that acts as a GTP-hydrolysis-dependent molecular chaperone, activating the urease apoprotein by helping to assemble the nickel containing metallocenter of UreC. The UreE protein probably delivers the nickel.

It localises to the cytoplasm. Required for maturation of urease via the functional incorporation of the urease nickel metallocenter. In Nostoc punctiforme (strain ATCC 29133 / PCC 73102), this protein is Urease accessory protein UreD.